We begin with the raw amino-acid sequence, 194 residues long: 3-isopropylmalate dehydratase small subunit (194 aa).

The protein belongs to the LeuD family. LeuD type 1 subfamily. As to quaternary structure, heterodimer of LeuC and LeuD.

The catalysed reaction is (2R,3S)-3-isopropylmalate = (2S)-2-isopropylmalate. Its pathway is amino-acid biosynthesis; L-leucine biosynthesis; L-leucine from 3-methyl-2-oxobutanoate: step 2/4. In terms of biological role, catalyzes the isomerization between 2-isopropylmalate and 3-isopropylmalate, via the formation of 2-isopropylmaleate. In Leuconostoc mesenteroides subsp. mesenteroides (strain ATCC 8293 / DSM 20343 / BCRC 11652 / CCM 1803 / JCM 6124 / NCDO 523 / NBRC 100496 / NCIMB 8023 / NCTC 12954 / NRRL B-1118 / 37Y), this protein is 3-isopropylmalate dehydratase small subunit.